Here is a 158-residue protein sequence, read N- to C-terminus: Cystin-1 (158 aa).

The interval M1 to E146 is disordered. G2 is lipidated: N-myristoyl glycine. Composition is skewed to low complexity over residues E19 to G32 and P39 to E52. A Ciliary targeting motif motif is present at residues A29 to G33. The span at D65–D75 shows a compositional bias: basic and acidic residues.

As to quaternary structure, interacts (when myristoylated) with UNC119 and UNC119B; interaction is required for localization to cilium. In terms of tissue distribution, expressed at high levels in the kidney and pancreas. Moderate expression seen in the skeletal muscle, liver and heart. A weak expression seen in the brain, lung, uterus, prostate, testis, small intestine and colon.

Its subcellular location is the cell projection. The protein resides in the cilium membrane. The protein localises to the cytoplasm. It is found in the cytoskeleton. It localises to the cilium axoneme. This Homo sapiens (Human) protein is Cystin-1 (CYS1).